A 299-amino-acid polypeptide reads, in one-letter code: Methionyl-tRNA formyltransferase (299 aa).

(6S)-5,6,7,8-tetrahydrofolate is bound at residue 109–112; that stretch reads SLLP.

Belongs to the Fmt family.

The catalysed reaction is L-methionyl-tRNA(fMet) + (6R)-10-formyltetrahydrofolate = N-formyl-L-methionyl-tRNA(fMet) + (6S)-5,6,7,8-tetrahydrofolate + H(+). Functionally, attaches a formyl group to the free amino group of methionyl-tRNA(fMet). The formyl group appears to play a dual role in the initiator identity of N-formylmethionyl-tRNA by promoting its recognition by IF2 and preventing the misappropriation of this tRNA by the elongation apparatus. This Wolbachia sp. subsp. Drosophila simulans (strain wRi) protein is Methionyl-tRNA formyltransferase.